The chain runs to 620 residues: Chaperone protein DnaK (620 aa).

At threonine 197 the chain carries Phosphothreonine; by autocatalysis. The segment at 597–620 (AMANKNNAEQPKKKDDDVIDAEVE) is disordered.

The protein belongs to the heat shock protein 70 family.

Acts as a chaperone. The protein is Chaperone protein DnaK of Helicobacter pylori (strain G27).